A 264-amino-acid chain; its full sequence is 3-methyl-2-oxobutanoate hydroxymethyltransferase (264 aa).

Aspartate 45 and aspartate 84 together coordinate Mg(2+). Residues 45–46, aspartate 84, and lysine 112 each bind 3-methyl-2-oxobutanoate; that span reads DS. Residue glutamate 114 coordinates Mg(2+). Glutamate 181 (proton acceptor) is an active-site residue.

This sequence belongs to the PanB family. In terms of assembly, homodecamer; pentamer of dimers. Mg(2+) serves as cofactor.

It localises to the cytoplasm. It catalyses the reaction 3-methyl-2-oxobutanoate + (6R)-5,10-methylene-5,6,7,8-tetrahydrofolate + H2O = 2-dehydropantoate + (6S)-5,6,7,8-tetrahydrofolate. Its pathway is cofactor biosynthesis; (R)-pantothenate biosynthesis; (R)-pantoate from 3-methyl-2-oxobutanoate: step 1/2. Functionally, catalyzes the reversible reaction in which hydroxymethyl group from 5,10-methylenetetrahydrofolate is transferred onto alpha-ketoisovalerate to form ketopantoate. This is 3-methyl-2-oxobutanoate hydroxymethyltransferase from Shigella flexneri serotype 5b (strain 8401).